We begin with the raw amino-acid sequence, 284 residues long: Bifunctional protein FolD (284 aa).

NADP(+) contacts are provided by residues 166–168 (GAS) and I232.

It belongs to the tetrahydrofolate dehydrogenase/cyclohydrolase family. As to quaternary structure, homodimer.

The catalysed reaction is (6R)-5,10-methylene-5,6,7,8-tetrahydrofolate + NADP(+) = (6R)-5,10-methenyltetrahydrofolate + NADPH. It carries out the reaction (6R)-5,10-methenyltetrahydrofolate + H2O = (6R)-10-formyltetrahydrofolate + H(+). It participates in one-carbon metabolism; tetrahydrofolate interconversion. Functionally, catalyzes the oxidation of 5,10-methylenetetrahydrofolate to 5,10-methenyltetrahydrofolate and then the hydrolysis of 5,10-methenyltetrahydrofolate to 10-formyltetrahydrofolate. This chain is Bifunctional protein FolD, found in Shewanella sp. (strain W3-18-1).